The chain runs to 39 residues: Small basic protein 1 (39 aa).

Pyrrolidone carboxylic acid is present on glutamine 1. Cystine bridges form between cysteine 6/cysteine 32, cysteine 10/cysteine 26, and cysteine 14/cysteine 31.

The protein resides in the secreted. This is Small basic protein 1 from Anas platyrhynchos (Mallard).